The chain runs to 376 residues: UPF0754 membrane protein BLi01057/BL02871 (376 aa).

Helical transmembrane passes span 1–21 and 356–376; these read MYVF…GAVT and YLGG…VILI.

This sequence belongs to the UPF0754 family.

It is found in the cell membrane. The polypeptide is UPF0754 membrane protein BLi01057/BL02871 (Bacillus licheniformis (strain ATCC 14580 / DSM 13 / JCM 2505 / CCUG 7422 / NBRC 12200 / NCIMB 9375 / NCTC 10341 / NRRL NRS-1264 / Gibson 46)).